An 887-amino-acid chain; its full sequence is MSGVNEIRSMFLDYFRKNGHEVVPSSPLVPRNDPTLMFTNAGMVQFKNVFTGLEQRPYSTAATAQKCVRAGGKHNDLDNVGYTARHHTFFEMLGNFSFGDYFKERAIELAWNLITKEYGLDAKRLLVTVYHTDDEAFGLWKKIAGLSDDRIIRIATSDNFWAMGDTGPCGPCSEIFYDHGDHIWGGPPGSADEDGDRFIEIWNLVFMQYEQITKEERVDLPRPSIDTGMGLERLAAVLQGQHDNYDIDLFRALIAASEEATGVKAEGDRRASHRVIADHLRSSAFLIADGVLPSNEGRGYVLRRIMRRAMRHAQLLGAQDPLMWKLLPALVGQMGRAYPELVRAEALISETLKLEETRFRKTLERGLNLLEEASADLSEGDQFNGETAFKLYDTYGFPLDLTQDALRAKGIGVDTDAFTAAMQRQKAEARANWTGSGDAATETIWFELRDKHGATDFLGYDTESAEGVIQAIVRDGTVVESASKGETVQLVLNQTPFYGESGGQVGDTGVVTTESGKLTVTDTQKRGEGLFVHYCVVEEGSVKTGEAAALAVDHARRTRLRANHSATHLLHEALREVLGTHVSQKGSLVAPERLRFDVSHPKPMTSEELKVVEEMANEIIVQNTPVVTRLMSVDDAIAEGAMALFGEKYGDEVRVVSMGQGLHGSKAGKAYSVELCGGTHVSATGDIGLVRIVSESAVGSGVRRVEALTGEAARAYLGEQDERVKALAAALKVQPSDVLGRVESLLDERRKLERELTEAKKKLALAGDGQNGSGEAAREIGGVRFLGRVVSGVEPKDLKSLADDGKKTLGSGVVAFVGVSGDGKASAVVAVTDDLTSKVSAVDLVRVASAALGGKGGGGRPDMAQAGGPDGGRAAEAIEAVAVALAG.

Zn(2+) contacts are provided by H564, H568, C676, and H680.

This sequence belongs to the class-II aminoacyl-tRNA synthetase family. It depends on Zn(2+) as a cofactor.

The protein localises to the cytoplasm. The catalysed reaction is tRNA(Ala) + L-alanine + ATP = L-alanyl-tRNA(Ala) + AMP + diphosphate. Catalyzes the attachment of alanine to tRNA(Ala) in a two-step reaction: alanine is first activated by ATP to form Ala-AMP and then transferred to the acceptor end of tRNA(Ala). Also edits incorrectly charged Ser-tRNA(Ala) and Gly-tRNA(Ala) via its editing domain. The polypeptide is Alanine--tRNA ligase (Sinorhizobium medicae (strain WSM419) (Ensifer medicae)).